The sequence spans 66 residues: U1-theraphotoxin-Cg1d 2 (66 aa).

The N-terminal stretch at 1-21 (MKMSALFPIFGLPLLFCNSFA) is a signal peptide. Residues 22 to 29 (AELKATGR) constitute a propeptide that is removed on maturation. 3 disulfides stabilise this stretch: C31–C46, C38–C51, and C45–C58. P63 bears the Proline amide mark.

The protein belongs to the neurotoxin 10 (Hwtx-1) family. 46 (Jztx-7/10/12) subfamily. As to expression, expressed by the venom gland.

It is found in the secreted. Probable ion channel inhibitor. This chain is U1-theraphotoxin-Cg1d 2, found in Chilobrachys guangxiensis (Chinese earth tiger tarantula).